The following is a 455-amino-acid chain: tRNA modification GTPase MnmE (455 aa).

(6S)-5-formyl-5,6,7,8-tetrahydrofolate-binding residues include arginine 24, glutamate 86, and arginine 125. Residues 220-376 (GLTVAIIGRP…LETAILETVQ (157 aa)) enclose the TrmE-type G domain. K(+) is bound at residue asparagine 230. GTP contacts are provided by residues 230 to 235 (NVGKSS), 249 to 255 (TDLPGTT), and 274 to 277 (DTAG). Serine 234 is a Mg(2+) binding site. Positions 249, 251, and 254 each coordinate K(+). Threonine 255 serves as a coordination point for Mg(2+). Lysine 455 contacts (6S)-5-formyl-5,6,7,8-tetrahydrofolate.

Belongs to the TRAFAC class TrmE-Era-EngA-EngB-Septin-like GTPase superfamily. TrmE GTPase family. As to quaternary structure, homodimer. Heterotetramer of two MnmE and two MnmG subunits. It depends on K(+) as a cofactor.

It is found in the cytoplasm. In terms of biological role, exhibits a very high intrinsic GTPase hydrolysis rate. Involved in the addition of a carboxymethylaminomethyl (cmnm) group at the wobble position (U34) of certain tRNAs, forming tRNA-cmnm(5)s(2)U34. This chain is tRNA modification GTPase MnmE, found in Acaryochloris marina (strain MBIC 11017).